The sequence spans 142 residues: Large ribosomal subunit protein uL13 (142 aa).

It belongs to the universal ribosomal protein uL13 family. In terms of assembly, part of the 50S ribosomal subunit.

In terms of biological role, this protein is one of the early assembly proteins of the 50S ribosomal subunit, although it is not seen to bind rRNA by itself. It is important during the early stages of 50S assembly. This chain is Large ribosomal subunit protein uL13, found in Edwardsiella ictaluri (strain 93-146).